Consider the following 339-residue polypeptide: Dihydroorotate dehydrogenase (quinone) (339 aa).

Residues 62–66 and T86 contribute to the FMN site; that span reads AGMDK. K66 is a substrate binding site. 111 to 115 contributes to the substrate binding site; that stretch reads NRMGF. FMN is bound by residues N139 and N172. N172 provides a ligand contact to substrate. The active-site Nucleophile is S175. Residue N177 participates in substrate binding. The FMN site is built by K217 and T245. Residue 246–247 coordinates substrate; it reads NT. Residues G268, G297, and 318-319 each bind FMN; that span reads YS.

The protein belongs to the dihydroorotate dehydrogenase family. Type 2 subfamily. As to quaternary structure, monomer. The cofactor is FMN.

The protein resides in the cell membrane. It catalyses the reaction (S)-dihydroorotate + a quinone = orotate + a quinol. The protein operates within pyrimidine metabolism; UMP biosynthesis via de novo pathway; orotate from (S)-dihydroorotate (quinone route): step 1/1. Catalyzes the conversion of dihydroorotate to orotate with quinone as electron acceptor. In Shewanella sp. (strain ANA-3), this protein is Dihydroorotate dehydrogenase (quinone).